Here is a 785-residue protein sequence, read N- to C-terminus: MKFTFSWLRRYLDTDVSLDVIIKKLSDIGIEVNNVDYCEHLKTFVIAEVLEVNPHHSANKLKICKVSDGKQILQVVCGASNVKVGMKSVLACVGSIMPTDQSIIEVVKLRGVESYGMLCSNDELGIVDHRNSKNGIIELPNTYNVGDTFFPCDPIIEVSITPNRGDCLGVYGIARDLAAAGLGKLKCIGELSNHSNCSSPIEVSVQVDGIVKGRYIKGIKNCESPKWLKDYLLVCGINSISFVVDITNYIMLSFNRPLHVYDANKIKNKLIFKKADNQTEFYALNDKKYILGTENIVAVDLENSIHSVAGVIGSKLSSCLLDTEDIFLESAWFAPVDIVLSSKKIKLSTDSSYRFERFVDPRFLQTGLDLATKMILEYCGGTHFDVVSNEVHVVDNIELNFFPDSVRSIGNVNISNEEIFDFLIKLGFIVDNNNEFLWRVTVPSWRSDIKHSSDIVEEVLRLYGYDKICEEPIPISHVDISDDYHDRLKALLLSEGLMEVITWSFTNMVFAEKLGYSSELLLIDNPISDKLNLMRPSLLLNLLQVVYENQAYGSSEIAIFEIGQVYGFNNICGSNSNVVCGVRYGNNLPRNLYKCDRSVDVFDVKSDVISILQELNIESNSIELRKSDKSYLHPVRSADVYFKDICLGYFGELHPNIVHLYEIKRPVVCFEVFLYKIPKVDVAHKELTESCYQSVKRDFAFLIDKDTSVQHLIDVTKNSNPVLIDNVTVFDLYEGNSIGDNKLSVALSVTFNPVDHTLNDQEIKDASDLIINAVAEKLGGVLRSF.

The 113-residue stretch at 38–150 (CEHLKTFVIA…NTYNVGDTFF (113 aa)) folds into the tRNA-binding domain. One can recognise a B5 domain in the interval 394-470 (VDNIELNFFP…RLYGYDKICE (77 aa)). Positions 448, 454, 457, and 458 each coordinate Mg(2+). Positions 690-783 (SCYQSVKRDF…VAEKLGGVLR (94 aa)) constitute an FDX-ACB domain.

The protein belongs to the phenylalanyl-tRNA synthetase beta subunit family. Type 1 subfamily. Tetramer of two alpha and two beta subunits. It depends on Mg(2+) as a cofactor.

Its subcellular location is the cytoplasm. It catalyses the reaction tRNA(Phe) + L-phenylalanine + ATP = L-phenylalanyl-tRNA(Phe) + AMP + diphosphate + H(+). This chain is Phenylalanine--tRNA ligase beta subunit, found in Ehrlichia canis (strain Jake).